The primary structure comprises 229 residues: Large ribosomal subunit protein uL1 (229 aa).

Belongs to the universal ribosomal protein uL1 family. In terms of assembly, part of the 50S ribosomal subunit.

Binds directly to 23S rRNA. The L1 stalk is quite mobile in the ribosome, and is involved in E site tRNA release. In terms of biological role, protein L1 is also a translational repressor protein, it controls the translation of the L11 operon by binding to its mRNA. The protein is Large ribosomal subunit protein uL1 of Staphylococcus aureus (strain MRSA252).